The following is a 935-amino-acid chain: Potassium channel AKT1 (935 aa).

Residues 1–106 (MARWGAARMA…YDRRYRIWET (106 aa)) are Cytoplasmic-facing. The chain crosses the membrane as a helical span at residues 107–127 (FLIVLVVYSAWVSPFEFGFIP). Over 128 to 136 (KPTGALATA) the chain is Extracellular. The chain crosses the membrane as a helical span at residues 137-157 (DNVVNAFFAVDIILTFFVAYL). The Cytoplasmic portion of the chain corresponds to 158–178 (DKMSYMLEDDPKKIAWRYSTT). A helical membrane pass occupies residues 179–199 (WLVLDVASTIPSEFARRILPS). At 200–205 (KLRSYG) the chain is on the extracellular side. A helical; Voltage-sensor membrane pass occupies residues 206–226 (FFNMLRLWRLRRVSSLFSRLE). At 227–240 (KDRHFNYFWVRCAK) the chain is on the cytoplasmic side. Residues 241–261 (LICVTLFAVHCAACFYYLLAD) traverse the membrane as a helical segment. The Extracellular portion of the chain corresponds to 262 to 288 (RYPVPTSTWIGNYMADFHERSLWIRYV). Positions 289–308 (TSVYWSITTLTTVGYGDLHA) form an intramembrane region, pore-forming. Topologically, residues 309–312 (ENTR) are extracellular. The helical transmembrane segment at 313–333 (EMIFNIFYMLFNLGLTAYLIG) threads the bilayer. Residues 334–935 (NMTNLVVHGT…WDAEKMKGKS (602 aa)) are Cytoplasmic-facing. A nucleoside 3',5'-cyclic phosphate is bound at residue 419–538 (LFQGVSNDLI…TIIMNNLIQF (120 aa)). ANK repeat units follow at residues 565 to 594 (DLPI…DPNE), 598 to 627 (DGHT…DPNA), 631 to 660 (EGKV…DLSS), 662 to 691 (DTGL…DVNR), 695 to 724 (DGTT…DIDK), and 728 to 757 (NGWT…ATAS). Positions 826-854 (SQAQRETDHPLSRGGLAATGSPNPSSGSR) are disordered. Residues 845–854 (GSPNPSSGSR) show a composition bias toward polar residues. Residues 859–935 (RVTISCPEKG…WDAEKMKGKS (77 aa)) enclose the KHA domain.

The protein belongs to the potassium channel family. Plant (TC 1.A.1.4) subfamily. In terms of assembly, the potassium channel is probably a homo- or heterotetrameric complex of pore-forming subunits. Expressed in roots and coleoptile of young seedlings.

It is found in the membrane. Functionally, highly selective inward-rectifying potassium channel that mediates potassium uptake by plant roots. Assuming opened or closed conformations in response to the voltage difference across the membrane, the channel is activated by hyperpolarization. May be a major salt-sensitive potassium channel in roots. The chain is Potassium channel AKT1 (AKT1) from Oryza sativa subsp. japonica (Rice).